The primary structure comprises 136 residues: Putative pre-16S rRNA nuclease (136 aa).

The protein belongs to the YqgF nuclease family.

It localises to the cytoplasm. Its function is as follows. Could be a nuclease involved in processing of the 5'-end of pre-16S rRNA. The chain is Putative pre-16S rRNA nuclease from Francisella philomiragia subsp. philomiragia (strain ATCC 25017 / CCUG 19701 / FSC 153 / O#319-036).